The primary structure comprises 262 residues: Catechol O-methyltransferase domain-containing protein 1 (262 aa).

Residues 12-32 (AALALGSAALGAAFATGLFLG) form a helical; Signal-anchor for type II membrane protein membrane-spanning segment. Residues Asp108, 110 to 111 (GT), Ser116, Glu134, Val135, Ala163, Asp185, Asp187, and Tyr194 contribute to the S-adenosyl-L-methionine site.

This sequence belongs to the class I-like SAM-binding methyltransferase superfamily. Cation-dependent O-methyltransferase family. Homodimer.

The protein localises to the membrane. Functionally, putative O-methyltransferase. This is Catechol O-methyltransferase domain-containing protein 1 (COMTD1) from Homo sapiens (Human).